The chain runs to 609 residues: X-ray repair cross-complementing protein 6 (609 aa).

The segment at methionine 1 to glycine 28 is disordered. Position 2 is an N-acetylserine (serine 2). Serine 2 is subject to Phosphoserine. At serine 6 the chain carries Phosphoserine; by PRKDC. Acidic residues predominate over residues glycine 12 to leucine 24. At serine 27 the chain carries Phosphoserine. Lysine 31 serves as the catalytic Schiff-base intermediate with DNA; for 5'-deoxyribose-5-phosphate lyase activity. Position 31 is an N6-acetyllysine (lysine 31). Phosphoserine; by PRKDC is present on serine 51. The 208-residue stretch at leucine 261–lysine 468 folds into the Ku domain. Residues valine 277 to aspartate 341 form a DNA-binding region. Lysine 287 is covalently cross-linked (Glycyl lysine isopeptide (Lys-Gly) (interchain with G-Cter in SUMO2)). Serine 306 bears the Phosphoserine mark. N6-acetyllysine occurs at positions 317, 331, and 338. Lysine 317 participates in a covalent cross-link: Glycyl lysine isopeptide (Lys-Gly) (interchain with G-Cter in SUMO2). The interaction with XRCC5 stretch occupies residues serine 373–valine 482. Threonine 455 carries the phosphothreonine modification. An N6-acetyllysine modification is found at lysine 461. Residues serine 477 and serine 520 each carry the phosphoserine modification. Positions proline 536–glutamate 562 are disordered. Residues lysine 539, lysine 542, and lysine 544 each carry the N6-acetyllysine modification. Serine 550 is subject to Phosphoserine. The segment at serine 550–aspartate 609 is interaction with DEAF1. An N6-acetyllysine mark is found at lysine 553 and lysine 556. A Glycyl lysine isopeptide (Lys-Gly) (interchain with G-Cter in SUMO2) cross-link involves residue lysine 556. The residue at position 560 (serine 560) is a Phosphoserine. Lysine 570 carries the N6,N6,N6-trimethyllysine modification. The SAP domain occupies leucine 573–phenylalanine 607. The interval valine 578 to glutamate 583 is interaction with BAX.

It belongs to the ku70 family. As to quaternary structure, forms a heterodimer with XRCC5/Ku80; heterodimerization stabilizes XRCC5 protein. Component of the core long-range non-homologous end joining (NHEJ) complex (also named DNA-PK complex) composed of PRKDC, LIG4, XRCC4, XRCC6/Ku70, XRCC5/Ku86 and NHEJ1/XLF. Additional component of the NHEJ complex includes PAXX. Following autophosphorylation, PRKDC dissociates from DNA, leading to formation of the short-range NHEJ complex, composed of LIG4, XRCC4, XRCC6/Ku70, XRCC5/Ku86 and NHEJ1/XLF. The XRCC5-XRCC6 dimer also associates with NAA15, and this complex binds to the osteocalcin promoter and activates osteocalcin expression. In addition, XRCC6 interacts with the osteoblast-specific transcription factors MSX2, RUNX2 and DLX5. Interacts with ELF3. Interacts with ATP23. The XRCC5-XRRC6 dimer associates in a DNA-dependent manner with APEX1. Binds to CDK9 isoform 2. Identified in a complex with DEAF1 and XRCC5. Interacts with DEAF1 (via the SAND domain); the interaction is direct and may be inhibited by DNA-binding. Interacts with CLU. Interacts with NR4A3; the DNA-dependent protein kinase complex DNA-PK phosphorylates and activates NR4A3 and prevents NR4A3 ubiquitinylation and degradation. Interacts with CYREN isoform 1 (CYREN-1) and isoform 4 (CYREN-2) (via KBM motif). Interacts (via N-terminus) with HSF1 (via N-terminus); this interaction is direct and prevents XRCC5/XRCC6 heterodimeric binding and non-homologous end joining (NHEJ) repair activities induced by ionizing radiation (IR). Part of the HDP-RNP complex composed of at least HEXIM1, PRKDC, XRCC5, XRCC6, paraspeckle proteins (SFPQ, NONO, PSPC1, RBM14, and MATR3) and NEAT1 RNA. Interacts with HMBOX1. Interacts with ATF7. Interacts with APLF (via KBM motif). Interacts with WRN (via KBM motif). The XRCC5-XRCC6 dimer associates with ALKBH2. Interacts with TPRN; TPRN interacts with a number of DNA damage response proteins, is recruited to sites of DNA damage and may play a role in DNA damage repair. When not acetylated, interacts with BAX. Interacts with ERCC6L2. (Microbial infection) Interacts with human T-cell leukemia virus 1/HTLV-1 protein HBZ. Phosphorylation by PRKDC may enhance helicase activity. Phosphorylation of Ser-51 does not affect DNA repair. Post-translationally, ADP-ribosylated by PARP3. In terms of processing, methylation by SETD4 leads to accumulation in the cytoplasm and is a prerequisite for acetylation, possibly due to the change of subcellular from the nucleus to the cytosol initiated by methylation, acetylation occurring in the cytosol. Acetylation can be catalyzed in vitro by CREBBP/CBP and KAT2B/PCAF.

It is found in the nucleus. Its subcellular location is the chromosome. The protein resides in the cytoplasm. Functionally, single-stranded DNA-dependent ATP-dependent helicase that plays a key role in DNA non-homologous end joining (NHEJ) by recruiting DNA-PK to DNA. Required for double-strand break repair and V(D)J recombination. Also has a role in chromosome translocation. Has a role in chromosome translocation. The DNA helicase II complex binds preferentially to fork-like ends of double-stranded DNA in a cell cycle-dependent manner. It works in the 3'-5' direction. During NHEJ, the XRCC5-XRRC6 dimer performs the recognition step: it recognizes and binds to the broken ends of the DNA and protects them from further resection. Binding to DNA may be mediated by XRCC6. The XRCC5-XRRC6 dimer acts as a regulatory subunit of the DNA-dependent protein kinase complex DNA-PK by increasing the affinity of the catalytic subunit PRKDC to DNA by 100-fold. The XRCC5-XRRC6 dimer is probably involved in stabilizing broken DNA ends and bringing them together. The assembly of the DNA-PK complex to DNA ends is required for the NHEJ ligation step. Probably also acts as a 5'-deoxyribose-5-phosphate lyase (5'-dRP lyase), by catalyzing the beta-elimination of the 5' deoxyribose-5-phosphate at an abasic site near double-strand breaks. 5'-dRP lyase activity allows to 'clean' the termini of abasic sites, a class of nucleotide damage commonly associated with strand breaks, before such broken ends can be joined. The XRCC5-XRRC6 dimer together with APEX1 acts as a negative regulator of transcription. In association with NAA15, the XRCC5-XRRC6 dimer binds to the osteocalcin promoter and activates osteocalcin expression. Plays a role in the regulation of DNA virus-mediated innate immune response by assembling into the HDP-RNP complex, a complex that serves as a platform for IRF3 phosphorylation and subsequent innate immune response activation through the cGAS-STING pathway. Negatively regulates apoptosis by interacting with BAX and sequestering it from the mitochondria. Might have deubiquitination activity, acting on BAX. The protein is X-ray repair cross-complementing protein 6 (XRCC6) of Homo sapiens (Human).